The chain runs to 927 residues: Nonsense-mediated mRNA decay factor SMG8 (927 aa).

Disordered regions lie at residues 543 to 581 (NTGK…NTAS), 611 to 636 (QARS…DTEN), and 643 to 662 (QEPA…AVST). Acidic residues predominate over residues 551–566 (QDEDAGEDEAEEEEGQ). Over residues 613–633 (RSEQLSNSEQNTTRSGSSSVD) the composition is skewed to polar residues. Positions 644-654 (EPAKKEAREDV) are enriched in basic and acidic residues.

The protein belongs to the SMG8 family.

Involved in nonsense-mediated decay (NMD) of mRNAs containing premature stop codons. Probable component of kinase complex containing nonC and recruited to stalled ribosomes. This Drosophila sechellia (Fruit fly) protein is Nonsense-mediated mRNA decay factor SMG8.